Here is a 625-residue protein sequence, read N- to C-terminus: Chaperone protein HtpG (625 aa).

Residues 1–339 (MNKQTLSFQA…SSDLPLNVSR (339 aa)) form an a; substrate-binding region. The interval 340-557 (ELLQESRDVK…DGDISGHLAR (218 aa)) is b. Residues 558-625 (LLKQAGQSAP…YVQRVNRLLV (68 aa)) form a c region.

Belongs to the heat shock protein 90 family. In terms of assembly, homodimer.

It localises to the cytoplasm. Molecular chaperone. Has ATPase activity. In Methylibium petroleiphilum (strain ATCC BAA-1232 / LMG 22953 / PM1), this protein is Chaperone protein HtpG.